The chain runs to 1013 residues: Receptor-type tyrosine-protein phosphatase N2 (1013 aa).

Residues 1–19 (MALPLLLLLLLLLPPRVLP) form the signal peptide. The interval 1-419 (MALPLLLLLL…PGALPFAKPL (419 aa)) is involved in localization to secretory granules; interaction with CPE. Residues 20–613 (AAPSSVPHGR…QAEQEDSTKF (594 aa)) lie on the Extracellular side of the membrane. Disordered stretches follow at residues 116–137 (RHPE…ERRY), 273–302 (MPRP…TGEG), 342–382 (DHRG…VQDD), and 401–487 (LQDH…SLPA). Residues 419–430 (LKMERKKSERPE) show a composition bias toward basic and acidic residues. 2 positions are modified to phosphoserine: S434 and S435. N562 is a glycosylation site (N-linked (GlcNAc...) asparagine). A helical membrane pass occupies residues 614 to 634 (IALTLVSLACILGVLLASGLI). The Cytoplasmic portion of the chain corresponds to 635-1013 (YCLRHSSQHR…VNAILKALPQ (379 aa)). Residues 664 to 673 (YQELCRQRMA) carry the Tyrosine-based internalization motif motif. Positions 673–717 (ATRPPDRPEGPHTSRISSVSSQFSDGPMPSPSARSSASSWSEEPV) are disordered. Over residues 686–696 (SRISSVSSQFS) the composition is skewed to polar residues. Phosphoserine occurs at positions 690 and 696. Low complexity predominate over residues 703–717 (PSARSSASSWSEEPV). The Tyrosine-protein phosphatase domain maps to 743 to 1003 (LEKEWEALCA…EFALTAVAEE (261 aa)). Substrate-binding positions include D911 and 943-949 (CSDGAGR). Catalysis depends on C943, which acts as the Phosphocysteine intermediate. K968 is modified (N6-acetyllysine). Q988 contributes to the substrate binding site. The Leucine-based sorting signal signature appears at 1002–1008 (EEVNAIL).

Belongs to the protein-tyrosine phosphatase family. Receptor class 8 subfamily. Self-associates. Interacts (via cytoplasmic domain) with PTPRN (via cytoplasmic domain). Interacts (precursor form) with CPE. Interacts with HAP1. Interacts with AP2A1 or AP2A2 and AP1G1; indicative for an association with adaptor protein complex 2 (AP-2) and adaptor protein complex 1 (AP-1). Interacts with AP2M1; indicative for an association with adaptor protein complex 2 (AP-2). Interacts with MYO5A. Post-translationally, subject to proteolytic cleavage at multiple sites. As to expression, detected in pancreatic islets and adrenal medulla.

It is found in the cytoplasmic vesicle. It localises to the secretory vesicle membrane. The protein localises to the secretory vesicle. The protein resides in the synaptic vesicle membrane. It catalyses the reaction O-phospho-L-tyrosyl-[protein] + H2O = L-tyrosyl-[protein] + phosphate. In terms of biological role, plays a role in vesicle-mediated secretory processes. Required for normal accumulation of secretory vesicles in hippocampus, pituitary and pancreatic islets. Required for the accumulation of normal levels of insulin-containing vesicles and preventing their degradation. Plays a role in insulin secretion in response to glucose stimuli. Required for normal accumulation of the neurotransmitters norepinephrine, dopamine and serotonin in the brain. In females, but not in males, required for normal accumulation and secretion of pituitary hormones, such as luteinizing hormone (LH) and follicle-stimulating hormone (FSH). Required to maintain normal levels of renin expression and renin release. May regulate catalytic active protein-tyrosine phosphatases such as PTPRA through dimerization. Has phosphatidylinositol phosphatase activity; the PIPase activity is involved in its ability to regulate insulin secretion. Can dephosphorylate phosphatidylinositol 4,5-biphosphate, phosphatidylinositol 5-phosphate and phosphatidylinositol 3-phosphate. Regulates PI(4,5)P2 level in the plasma membrane and localization of cofilin at the plasma membrane and thus is indirectly involved in regulation of actin dynamics related to cell migration and metastasis; upon hydrolysis of PI(4,5)P2 cofilin is released from the plasma membrane and acts in the cytoplasm in severing F-actin filaments. The protein is Receptor-type tyrosine-protein phosphatase N2 (PTPRN2) of Macaca nemestrina (Pig-tailed macaque).